The sequence spans 300 residues: Porphobilinogen deaminase (300 aa).

Cysteine 239 carries the S-(dipyrrolylmethanemethyl)cysteine modification.

The protein belongs to the HMBS family. In terms of assembly, monomer. It depends on dipyrromethane as a cofactor.

It carries out the reaction 4 porphobilinogen + H2O = hydroxymethylbilane + 4 NH4(+). It participates in porphyrin-containing compound metabolism; protoporphyrin-IX biosynthesis; coproporphyrinogen-III from 5-aminolevulinate: step 2/4. In terms of biological role, tetrapolymerization of the monopyrrole PBG into the hydroxymethylbilane pre-uroporphyrinogen in several discrete steps. This is Porphobilinogen deaminase from Francisella tularensis subsp. tularensis (strain FSC 198).